We begin with the raw amino-acid sequence, 457 residues long: Glutamate--tRNA ligase 1 (457 aa).

Residues 9–19 carry the 'HIGH' region motif; that stretch reads PSPTGYIHIGN. The short motif at 250–254 is the 'KMSKS' region element; that stretch reads GLSKR. K253 contacts ATP.

It belongs to the class-I aminoacyl-tRNA synthetase family. Glutamate--tRNA ligase type 1 subfamily. As to quaternary structure, monomer.

The protein resides in the cytoplasm. It carries out the reaction tRNA(Glu) + L-glutamate + ATP = L-glutamyl-tRNA(Glu) + AMP + diphosphate. Functionally, catalyzes the attachment of glutamate to tRNA(Glu) in a two-step reaction: glutamate is first activated by ATP to form Glu-AMP and then transferred to the acceptor end of tRNA(Glu). This is Glutamate--tRNA ligase 1 from Brucella ovis (strain ATCC 25840 / 63/290 / NCTC 10512).